The sequence spans 320 residues: ATP-dependent 6-phosphofructokinase (320 aa).

G12 is an ATP binding site. ADP-binding positions include 22 to 26 and 55 to 60; these read RGVVR and RYSVSD. ATP contacts are provided by residues 73–74 and 103–106; these read RF and GDGS. Mg(2+) is bound at residue D104. 126 to 128 provides a ligand contact to substrate; that stretch reads TID. Catalysis depends on D128, which acts as the Proton acceptor. Residue R155 coordinates ADP. Substrate is bound by residues R163 and 170 to 172; that span reads MGR. Residues 186 to 188, K212, and 214 to 216 contribute to the ADP site; these read GCE and KKH. Substrate contacts are provided by residues E223, R244, and 250–253; that span reads HIQR.

Belongs to the phosphofructokinase type A (PFKA) family. ATP-dependent PFK group I subfamily. Prokaryotic clade 'B1' sub-subfamily. In terms of assembly, homotetramer. Mg(2+) serves as cofactor.

The protein resides in the cytoplasm. The enzyme catalyses beta-D-fructose 6-phosphate + ATP = beta-D-fructose 1,6-bisphosphate + ADP + H(+). The protein operates within carbohydrate degradation; glycolysis; D-glyceraldehyde 3-phosphate and glycerone phosphate from D-glucose: step 3/4. With respect to regulation, allosterically activated by ADP and other diphosphonucleosides, and allosterically inhibited by phosphoenolpyruvate. Catalyzes the phosphorylation of D-fructose 6-phosphate to fructose 1,6-bisphosphate by ATP, the first committing step of glycolysis. The sequence is that of ATP-dependent 6-phosphofructokinase from Buchnera aphidicola subsp. Acyrthosiphon pisum (strain 5A).